The chain runs to 429 residues: MDRIAIIGGAQLNGTIPVSGAKNSAIKLMAASLLTDEPLRLTNMPRLADTRFLGKLLTRLGVQVTESDGSDGQQTLLHAPEITSGFAPYDLVRQMRASFNVLGPLVARSGQAKVSLPGGCTIGARPVDLHLQAIEALGAKIDLHEGYVYAQAPRGLKGAEIRFPFVSVGATEHAMLAAVLADGVSVIHNAACEPELVDLQECLNAMGAKVEGAGTPTVTITGVPRLHGATHAVIPDRIEMGTYAVAAAMAGGEVRLSNARPGLIDALLDKLKEAGASVEETADGCIIRRNGQRLTAVDIETAPFPGFATDLQAQFMALMTTAKGESRIRETIFENRFMHAPELMRLGADISVSGGEARVRGVDQLEGAQVMATDLRASVSLVIAGLVARGETTVSRIYHLDRGFERLEEKLGACGAQVRRIKGDGEAEL.

Residue 22-23 (KN) participates in phosphoenolpyruvate binding. Position 96 (Arg-96) interacts with UDP-N-acetyl-alpha-D-glucosamine. The active-site Proton donor is the Cys-120. Cys-120 is modified (2-(S-cysteinyl)pyruvic acid O-phosphothioketal). UDP-N-acetyl-alpha-D-glucosamine-binding positions include 125–129 (RPVDL), Asp-310, and Ile-332.

Belongs to the EPSP synthase family. MurA subfamily.

Its subcellular location is the cytoplasm. The catalysed reaction is phosphoenolpyruvate + UDP-N-acetyl-alpha-D-glucosamine = UDP-N-acetyl-3-O-(1-carboxyvinyl)-alpha-D-glucosamine + phosphate. It functions in the pathway cell wall biogenesis; peptidoglycan biosynthesis. Cell wall formation. Adds enolpyruvyl to UDP-N-acetylglucosamine. The sequence is that of UDP-N-acetylglucosamine 1-carboxyvinyltransferase from Caulobacter vibrioides (strain ATCC 19089 / CIP 103742 / CB 15) (Caulobacter crescentus).